A 141-amino-acid polypeptide reads, in one-letter code: Small ribosomal subunit protein bS16 (141 aa).

Composition is skewed to polar residues over residues 89–101 (NVSV…TEAI) and 109–129 (ATAN…TATI). Residues 89–141 (NVSVSHAESTEAITNAEPIQATANTESNEVSDSESTATATIRESEEQPPISES) form a disordered region.

The protein belongs to the bacterial ribosomal protein bS16 family.

The sequence is that of Small ribosomal subunit protein bS16 from Trichodesmium erythraeum (strain IMS101).